Reading from the N-terminus, the 372-residue chain is Ligninase LG6 (372 aa).

The first 21 residues, 1–21 (MALKQLAAAVALALSIQAAQG), serve as a signal peptide directing secretion. Residues 22–28 (AAVKEKR) constitute a propeptide that is removed on maturation. 2 cysteine pairs are disulfide-bonded: Cys-31/Cys-43 and Cys-62/Cys-148. His-75 acts as the Proton acceptor in catalysis. Residues Asp-76, Gly-94, Asp-96, and Ser-98 each contribute to the Ca(2+) site. His-204 serves as a coordination point for heme b. Ca(2+) contacts are provided by Ser-205, Asp-222, Thr-224, Val-227, and Asp-229. A disulfide bridge links Cys-277 with Cys-345. Asn-285 carries an N-linked (GlcNAc...) asparagine glycan. Over residues 352–361 (TLTTLPGPET) the composition is skewed to low complexity. The segment at 352 to 372 (TLTTLPGPETSVQRIQPPPGA) is disordered.

The protein belongs to the peroxidase family. Ligninase subfamily. It depends on heme b as a cofactor. Ca(2+) serves as cofactor.

The catalysed reaction is 1-(3,4-dimethoxyphenyl)-2-(2-methoxyphenoxy)propane-1,3-diol + H2O2 = 3,4-dimethoxybenzaldehyde + guaiacol + glycolaldehyde + H2O. The enzyme catalyses 2 (3,4-dimethoxyphenyl)methanol + H2O2 = 2 (3,4-dimethoxyphenyl)methanol radical + 2 H2O. It participates in secondary metabolite metabolism; lignin degradation. Its function is as follows. Depolymerization of lignin. Catalyzes the C(alpha)-C(beta) cleavage of the propyl side chains of lignin. The chain is Ligninase LG6 (GLG6) from Phanerodontia chrysosporium (White-rot fungus).